The following is a 596-amino-acid chain: Protein kinase C iota type (596 aa).

The span at 1–12 shows a compositional bias: polar residues; sequence MPTQRDSSTMSH. Residues 1-21 are disordered; the sequence is MPTQRDSSTMSHTVACGGGGD. P2 is subject to N-acetylproline. Residues 2–28 are required for interaction with RAB2; sequence PTQRDSSTMSHTVACGGGGDHSHQVRV. Positions 2-253 are regulatory domain; that stretch reads PTQRDSSTMS…KASSSLGLQD (252 aa). Phosphothreonine is present on T3. 2 positions are modified to phosphoserine: S7 and S8. Position 9 is a phosphothreonine (T9). Positions 25–108 constitute a PB1 domain; that stretch reads QVRVKAYYRG…SELLIHVFPC (84 aa). Residues 72-91 are interaction with PARD6A; the sequence is DEEGDPCTVSSQLELEEAFR. Residues 125-134 carry the Pseudosubstrate motif; that stretch reads YRRGARRWRK. The Phorbol-ester/DAG-type zinc-finger motif lies at 140–190; the sequence is GHTFQAKRFNRRAHCAICTDRIWGLGRQGYKCINCKLLVHKKCHKLVTIEC. The region spanning 254-522 is the Protein kinase domain; the sequence is FDLLRVIGRG…FADIQGHPFF (269 aa). ATP is bound at residue 260-268; the sequence is IGRGSYAKV. Residues Y265 and Y280 each carry the phosphotyrosine; by SRC modification. K283 is an ATP binding site. Y334 carries the post-translational modification Phosphotyrosine; by SRC. D378 serves as the catalytic Proton acceptor. T412 is subject to Phosphothreonine; by PDPK1. Residues 523–594 enclose the AGC-kinase C-terminal domain; sequence RNVDWDMMEQ…INPLLMSAEE (72 aa). Residue T564 is modified to Phosphothreonine.

This sequence belongs to the protein kinase superfamily. AGC Ser/Thr protein kinase family. PKC subfamily. As to quaternary structure, forms a complex with SQSTM1 and MP2K5. Interacts directly with SQSTM1. Interacts with IKBKB. Interacts with PARD6A, PARD6B and PARD6G. Part of a quaternary complex containing aPKC, PARD3, a PARD6 protein (PARD6A, PARD6B or PARD6G) and a GTPase protein (CDC42 or RAC1). Part of a complex with LLGL1 and PARD6B. Interacts with ADAP1/CENTA1. Interaction with SMG1, through the ZN-finger domain, activates the kinase activity. Interacts with CDK7. Forms a complex with RAB2A and GAPDH involved in recruitment onto the membrane of vesicular tubular clusters (VTCs). Interacts with ECT2 ('Thr-359' phosphorylated form). Interacts with VAMP2. Interacts with WDFY2 (via WD repeats 1-3). Phosphorylation at Thr-412 in the activation loop is not mandatory for activation. Upon neuronal growth factor (NGF) stimulation, phosphorylated by SRC at Tyr-265, Tyr-280 and Tyr-334. Phosphorylation at Tyr-265 facilitates binding to KPNB1/importin-beta regulating entry of PRKCI into the nucleus. Phosphorylation on Tyr-334 is important for NF-kappa-B stimulation. Phosphorylated at Thr-564 during the initial phase of long term potentiation. Expressed in dorsal hippocampus (at protein level).

It is found in the cytoplasm. Its subcellular location is the membrane. The protein localises to the endosome. It localises to the nucleus. It carries out the reaction L-seryl-[protein] + ATP = O-phospho-L-seryl-[protein] + ADP + H(+). It catalyses the reaction L-threonyl-[protein] + ATP = O-phospho-L-threonyl-[protein] + ADP + H(+). With respect to regulation, atypical PKCs (PRKCI and PRKCZ) exhibit an elevated basal enzymatic activity (that may be due to the interaction with SMG1 or SQSTM1) and are not regulated by diacylglycerol, phosphatidylserine, phorbol esters or calcium ions. Two specific sites, Thr-412 (activation loop of the kinase domain) and Thr-564 (turn motif), need to be phosphorylated for its full activation. Might also be a target for novel lipid activators that are elevated during nutrient-stimulated insulin secretion. Its function is as follows. Calcium- and diacylglycerol-independent serine/ threonine-protein kinase that plays a general protective role against apoptotic stimuli, is involved in NF-kappa-B activation, cell survival, differentiation and polarity, and contributes to the regulation of microtubule dynamics in the early secretory pathway. Is necessary for BCR-ABL oncogene-mediated resistance to apoptotic drug in leukemia cells, protecting leukemia cells against drug-induced apoptosis. In cultured neurons, prevents amyloid beta protein-induced apoptosis by interrupting cell death process at a very early step. In glioblastoma cells, may function downstream of phosphatidylinositol 3-kinase (PI3K) and PDPK1 in the promotion of cell survival by phosphorylating and inhibiting the pro-apoptotic factor BAD. Can form a protein complex in non-small cell lung cancer (NSCLC) cells with PARD6A and ECT2 and regulate ECT2 oncogenic activity by phosphorylation, which in turn promotes transformed growth and invasion. In response to nerve growth factor (NGF), acts downstream of SRC to phosphorylate and activate IRAK1, allowing the subsequent activation of NF-kappa-B and neuronal cell survival. Functions in the organization of the apical domain in epithelial cells by phosphorylating EZR. This step is crucial for activation and normal distribution of EZR at the early stages of intestinal epithelial cell differentiation. Forms a protein complex with LLGL1 and PARD6B independently of PARD3 to regulate epithelial cell polarity. Plays a role in microtubule dynamics in the early secretory pathway through interaction with RAB2A and GAPDH and recruitment to vesicular tubular clusters (VTCs). In human coronary artery endothelial cells (HCAEC), is activated by saturated fatty acids and mediates lipid-induced apoptosis. Downstream of PI3K is required for insulin-stimulated glucose transport. Activates RAB4A and promotes its association with KIF3A which is required for the insulin-induced SLC2A4/GLUT4 translocation in adipocytes. Is essential in early embryogenesis and development of differentiating photoreceptors by playing a role in the establishment of epithelial and neuronal polarity. Involved in early synaptic long term potentiation phase in CA1 hippocampal cells and short term memory formation. In Rattus norvegicus (Rat), this protein is Protein kinase C iota type (Prkci).